Here is a 158-residue protein sequence, read N- to C-terminus: MNYIPMTLKGAEKLREELKYLKQTKRSEIIKSISEARQYGDLKENAEYQAAKEQQYFCESRIKEIESKLMHSKIIDIKKIPFRDRVVFGSTITIKNLKTLEEKTYKIVGDDEANFKNNLISISSPLSRGLIGKKTLEIVNINTPSGIIKYKILKINYL.

Belongs to the GreA/GreB family.

Its function is as follows. Necessary for efficient RNA polymerase transcription elongation past template-encoded arresting sites. The arresting sites in DNA have the property of trapping a certain fraction of elongating RNA polymerases that pass through, resulting in locked ternary complexes. Cleavage of the nascent transcript by cleavage factors such as GreA or GreB allows the resumption of elongation from the new 3'terminus. GreA releases sequences of 2 to 3 nucleotides. The protein is Transcription elongation factor GreA of Wigglesworthia glossinidia brevipalpis.